A 420-amino-acid chain; its full sequence is tRNA (guanine-N(7)-)-methyltransferase non-catalytic subunit TRM82 (420 aa).

The span at 59–68 (KENDSKRQKS) shows a compositional bias: basic and acidic residues. A disordered region spans residues 59–82 (KENDSKRQKSESGQAKVSKIPTPG). 4 WD repeats span residues 87–127 (PIYN…DNCL), 179–220 (GHVS…VIKN), 224–266 (GHHE…AKIE), and 340–379 (SYED…EETN).

The protein belongs to the WD repeat TRM82 family. As to quaternary structure, forms a heterodimer with the catalytic subunit TRM8.

The protein localises to the nucleus. It participates in tRNA modification; N(7)-methylguanine-tRNA biosynthesis. Its function is as follows. Required for the formation of N(7)-methylguanine at position 46 (m7G46) in tRNA. In the complex, it is required to stabilize and induce conformational changes of the catalytic subunit. The polypeptide is tRNA (guanine-N(7)-)-methyltransferase non-catalytic subunit TRM82 (Meyerozyma guilliermondii (strain ATCC 6260 / CBS 566 / DSM 6381 / JCM 1539 / NBRC 10279 / NRRL Y-324) (Yeast)).